Consider the following 70-residue polypeptide: Small ribosomal subunit protein bS21 (70 aa).

This sequence belongs to the bacterial ribosomal protein bS21 family.

This Campylobacter fetus subsp. fetus (strain 82-40) protein is Small ribosomal subunit protein bS21.